The following is a 198-amino-acid chain: Superoxide dismutase [Mn], mitochondrial (198 aa).

Histidine 26 provides a ligand contact to Mn(2+). Residue tyrosine 34 is modified to 3'-nitrotyrosine. 2 positions are modified to N6-acetyllysine; alternate: lysine 44 and lysine 51. An N6-succinyllysine; alternate mark is found at lysine 44 and lysine 51. Residue histidine 74 participates in Mn(2+) binding. Position 90 is an N6-acetyllysine (lysine 90). Lysine 98 and lysine 106 each carry N6-acetyllysine; alternate. An N6-succinyllysine; alternate mark is found at lysine 98 and lysine 106. Aspartate 159 and histidine 163 together coordinate Mn(2+). Lysine 178 is subject to N6-acetyllysine.

It belongs to the iron/manganese superoxide dismutase family. Homotetramer. It depends on Mn(2+) as a cofactor. Nitrated under oxidative stress. Nitration coupled with oxidation inhibits the catalytic activity. Post-translationally, acetylation at Lys-98 decreases enzymatic activity. Deacetylated by SIRT3 upon exposure to ionizing radiations or after long fasting. In terms of processing, polyubiquitinated; leading to proteasomal degradation. Deubiquitinated by USP36 which increases protein stability.

Its subcellular location is the mitochondrion matrix. The enzyme catalyses 2 superoxide + 2 H(+) = H2O2 + O2. Its function is as follows. Destroys superoxide anion radicals which are normally produced within the cells and which are toxic to biological systems. This Callithrix jacchus (White-tufted-ear marmoset) protein is Superoxide dismutase [Mn], mitochondrial (SOD2).